The sequence spans 42 residues: Iota-conotoxin-like R11.1 (42 aa).

Cystine bridges form between cysteine 5-cysteine 19, cysteine 12-cysteine 22, cysteine 18-cysteine 27, and cysteine 21-cysteine 36.

Belongs to the conotoxin I1 superfamily. Expressed by the venom duct.

Its subcellular location is the secreted. Functionally, iota-conotoxins bind to voltage-gated sodium channels (Nav) and act as agonists by shifting the voltage-dependence of activation to more hyperpolarized levels. Produces general excitatory symptoms. The protein is Iota-conotoxin-like R11.1 of Conus radiatus (Rayed cone).